A 177-amino-acid chain; its full sequence is MLALLKQFSEKRFVWFLLAFSSLALESTALYFQYGMGLQPCVLCVYERLAMIGLFVAGIIALLQPLAFILRLIALALGLFSSIKGLLISFRHLDLQMNPAPWKQCEFIPNFPETLPFHQWFPFIFNPTGSCNESQWSLFGLTMVQWLVVIFSLYVVILTLLLIAQVIKTRKQRRLFN.

Topologically, residues 1 to 14 (MLALLKQFSEKRFV) are cytoplasmic. A helical membrane pass occupies residues 15–31 (WFLLAFSSLALESTALY). Residues 32 to 49 (FQYGMGLQPCVLCVYERL) are Periplasmic-facing. A disulfide bridge connects residues cysteine 41 and cysteine 44. A helical membrane pass occupies residues 50 to 65 (AMIGLFVAGIIALLQP). Residues 66 to 72 (LAFILRL) lie on the Cytoplasmic side of the membrane. Residues 73–90 (IALALGLFSSIKGLLISF) traverse the membrane as a helical segment. Topologically, residues 91 to 145 (RHLDLQMNPAPWKQCEFIPNFPETLPFHQWFPFIFNPTGSCNESQWSLFGLTMVQ) are periplasmic. A disulfide bridge connects residues cysteine 105 and cysteine 131. A helical membrane pass occupies residues 146 to 164 (WLVVIFSLYVVILTLLLIA). The Cytoplasmic segment spans residues 165 to 177 (QVIKTRKQRRLFN).

It belongs to the DsbB family.

The protein resides in the cell inner membrane. Required for disulfide bond formation in some periplasmic proteins. Acts by oxidizing the DsbA protein. The protein is Disulfide bond formation protein B of Haemophilus influenzae (strain 86-028NP).